Consider the following 348-residue polypeptide: MNNILSFEINEIRNILQGWGEPSYRADQIFDWIYKKLVLNPLDMTNLSKTLRQKLLEYFSFQIPKVVRITGDGNTKKYLLELEDGENIETVLISHKNRNTVCVSVQVGCPIGCKFCATGLIGLKRNLETHEIIGQLMVIQEDLEKKEEKISNVVYMGMGEPLANYDNVIKSIRIIKEEWGFNIGSKHITLSTIGIIPKIYQLAEENLKIRLAISLHASNNELRSKIIPINKEYPIEELLESAFYYAEKTGRRVTFEYVLIKNFNDRREDAKELVRLLKGKPAHVNLIPWNKVREYPWETSDLKDIFRFKEILANSGINVTLRISYGSKIKAGCGQLRALYLKNKGETI.

Glu-89 acts as the Proton acceptor in catalysis. The Radical SAM core domain occupies 95–328 (HKNRNTVCVS…VTLRISYGSK (234 aa)). Cys-102 and Cys-333 are disulfide-bonded. [4Fe-4S] cluster is bound by residues Cys-109, Cys-113, and Cys-116. S-adenosyl-L-methionine-binding positions include 159 to 160 (GE), Ser-191, 214 to 216 (SLH), and Asn-290. Cys-333 functions as the S-methylcysteine intermediate in the catalytic mechanism.

The protein belongs to the radical SAM superfamily. RlmN family. The cofactor is [4Fe-4S] cluster.

The protein resides in the cytoplasm. It catalyses the reaction adenosine(2503) in 23S rRNA + 2 reduced [2Fe-2S]-[ferredoxin] + 2 S-adenosyl-L-methionine = 2-methyladenosine(2503) in 23S rRNA + 5'-deoxyadenosine + L-methionine + 2 oxidized [2Fe-2S]-[ferredoxin] + S-adenosyl-L-homocysteine. The enzyme catalyses adenosine(37) in tRNA + 2 reduced [2Fe-2S]-[ferredoxin] + 2 S-adenosyl-L-methionine = 2-methyladenosine(37) in tRNA + 5'-deoxyadenosine + L-methionine + 2 oxidized [2Fe-2S]-[ferredoxin] + S-adenosyl-L-homocysteine. In terms of biological role, specifically methylates position 2 of adenine 2503 in 23S rRNA and position 2 of adenine 37 in tRNAs. In Dictyoglomus turgidum (strain DSM 6724 / Z-1310), this protein is Probable dual-specificity RNA methyltransferase RlmN.